Here is a 273-residue protein sequence, read N- to C-terminus: Transposable element Tcb1 transposase (273 aa).

The protein belongs to the transposase 5 family.

It localises to the nucleus. Its function is as follows. Probably essential for transposable element Tcb1 transposition. The insertion of Tcb1 is the main cause of spontaneous mutations. The protein is Transposable element Tcb1 transposase of Caenorhabditis briggsae.